We begin with the raw amino-acid sequence, 330 residues long: Tryptophan--tRNA ligase (330 aa).

ATP contacts are provided by residues 10–12 and 18–19; these read QPS and GN. Residues 11-19 carry the 'HIGH' region motif; it reads PSGSVTLGN. An L-tryptophan-binding site is contributed by Asp-133. Residues 145-147, Ile-184, and 193-197 contribute to the ATP site; these read GED and KMSKS. Positions 193 to 197 match the 'KMSKS' region motif; sequence KMSKS.

The protein belongs to the class-I aminoacyl-tRNA synthetase family. As to quaternary structure, homodimer.

The protein localises to the cytoplasm. The enzyme catalyses tRNA(Trp) + L-tryptophan + ATP = L-tryptophyl-tRNA(Trp) + AMP + diphosphate + H(+). Functionally, catalyzes the attachment of tryptophan to tRNA(Trp). This Bacillus subtilis (strain 168) protein is Tryptophan--tRNA ligase.